Here is a 767-residue protein sequence, read N- to C-terminus: Phosphoribosylformylglycinamidine synthase subunit PurL (767 aa).

His-46 is a catalytic residue. Residues Tyr-49 and Lys-88 each contribute to the ATP site. A Mg(2+)-binding site is contributed by Glu-90. Substrate is bound by residues Ser-91–His-94 and Arg-113. Residue His-92 is the Proton acceptor of the active site. Asp-114 is a Mg(2+) binding site. Position 237 (Gln-237) interacts with substrate. Asp-265 is a binding site for Mg(2+). Residue Glu-309–Gln-311 participates in substrate binding. The ATP site is built by Asp-498 and Gly-535. A Mg(2+)-binding site is contributed by Asn-536. Substrate is bound at residue Ser-538.

This sequence belongs to the FGAMS family. In terms of assembly, monomer. Part of the FGAM synthase complex composed of 1 PurL, 1 PurQ and 2 PurS subunits.

The protein resides in the cytoplasm. The enzyme catalyses N(2)-formyl-N(1)-(5-phospho-beta-D-ribosyl)glycinamide + L-glutamine + ATP + H2O = 2-formamido-N(1)-(5-O-phospho-beta-D-ribosyl)acetamidine + L-glutamate + ADP + phosphate + H(+). It functions in the pathway purine metabolism; IMP biosynthesis via de novo pathway; 5-amino-1-(5-phospho-D-ribosyl)imidazole from N(2)-formyl-N(1)-(5-phospho-D-ribosyl)glycinamide: step 1/2. Part of the phosphoribosylformylglycinamidine synthase complex involved in the purines biosynthetic pathway. Catalyzes the ATP-dependent conversion of formylglycinamide ribonucleotide (FGAR) and glutamine to yield formylglycinamidine ribonucleotide (FGAM) and glutamate. The FGAM synthase complex is composed of three subunits. PurQ produces an ammonia molecule by converting glutamine to glutamate. PurL transfers the ammonia molecule to FGAR to form FGAM in an ATP-dependent manner. PurS interacts with PurQ and PurL and is thought to assist in the transfer of the ammonia molecule from PurQ to PurL. In Anaeromyxobacter sp. (strain Fw109-5), this protein is Phosphoribosylformylglycinamidine synthase subunit PurL.